A 276-amino-acid polypeptide reads, in one-letter code: MQHPAEHSPLGKTSEYVSSYTPSLLFPISRTAKWAELGLSAETLPYRGVDIWNCYELSWLTPAGKPVVAIGEFSIPADSPNIIESKSFKLYLNSLNQSAFDSREALRAVLQKDLSAAVGAPVGVRLRSLDEVAEEGIGRLPGRCIDELDIAVDGYEQPRPELLRCDAGRIVEEQLYSHLLKSNCPVTGQPDWGTLVVDYRGPALDPASLLAYLVSFRQHQDFHEQCVERIFLDLQRLLQPQALSVYARYVRRGGLDINPYRSLAEVAPDNRRLVRQ.

Position 83-85 (83-85) interacts with substrate; it reads IES. Position 85-86 (85-86) interacts with NADPH; it reads SK. The Thioimide intermediate role is filled by Cys184. Asp191 functions as the Proton donor in the catalytic mechanism. Position 223–224 (223–224) interacts with substrate; the sequence is HE. 252–253 is a binding site for NADPH; sequence RG.

It belongs to the GTP cyclohydrolase I family. QueF type 2 subfamily. Homodimer.

It localises to the cytoplasm. The enzyme catalyses 7-aminomethyl-7-carbaguanine + 2 NADP(+) = 7-cyano-7-deazaguanine + 2 NADPH + 3 H(+). It participates in tRNA modification; tRNA-queuosine biosynthesis. Its function is as follows. Catalyzes the NADPH-dependent reduction of 7-cyano-7-deazaguanine (preQ0) to 7-aminomethyl-7-deazaguanine (preQ1). The protein is NADPH-dependent 7-cyano-7-deazaguanine reductase of Pseudomonas aeruginosa (strain ATCC 15692 / DSM 22644 / CIP 104116 / JCM 14847 / LMG 12228 / 1C / PRS 101 / PAO1).